We begin with the raw amino-acid sequence, 369 residues long: Small RNA 2'-O-methyltransferase (369 aa).

Ser-39, Asp-57, and Ser-93 together coordinate S-adenosyl-L-methionine. The Mg(2+) site is built by Glu-111, Glu-114, His-115, and His-161.

The protein belongs to the methyltransferase superfamily. HEN1 family. Mg(2+) is required as a cofactor.

It localises to the cytoplasm. The catalysed reaction is small RNA 3'-end nucleotide + S-adenosyl-L-methionine = small RNA 3'-end 2'-O-methylnucleotide + S-adenosyl-L-homocysteine + H(+). In terms of biological role, methyltransferase that adds a 2'-O-methyl group at the 3'-end of piRNAs, a class of 24 to 30 nucleotide RNAs that are generated by a Dicer-independent mechanism and are primarily derived from transposons and other repeated sequence elements. This probably protects the 3'-end of piRNAs from uridylation activity and subsequent degradation. Stabilization of piRNAs is essential for gametogenesis. This Xenopus tropicalis (Western clawed frog) protein is Small RNA 2'-O-methyltransferase (henmt1).